Reading from the N-terminus, the 325-residue chain is Elongation factor P--(R)-beta-lysine ligase (325 aa).

Residue 76–78 participates in substrate binding; it reads SPE. Residues 100–102 and Asn109 each bind ATP; that span reads RNE. Position 118 (Tyr118) interacts with substrate. 244–245 provides a ligand contact to ATP; that stretch reads EL. Glu251 is a binding site for substrate. Gly300 serves as a coordination point for ATP.

It belongs to the class-II aminoacyl-tRNA synthetase family. EpmA subfamily. As to quaternary structure, homodimer.

It carries out the reaction D-beta-lysine + L-lysyl-[protein] + ATP = N(6)-((3R)-3,6-diaminohexanoyl)-L-lysyl-[protein] + AMP + diphosphate + H(+). In terms of biological role, with EpmB is involved in the beta-lysylation step of the post-translational modification of translation elongation factor P (EF-P) on 'Lys-34'. Catalyzes the ATP-dependent activation of (R)-beta-lysine produced by EpmB, forming a lysyl-adenylate, from which the beta-lysyl moiety is then transferred to the epsilon-amino group of EF-P 'Lys-34'. The chain is Elongation factor P--(R)-beta-lysine ligase from Salmonella paratyphi A (strain ATCC 9150 / SARB42).